The chain runs to 525 residues: GMP synthase [glutamine-hydrolyzing] (525 aa).

The Glutamine amidotransferase type-1 domain occupies 9-207 (RILILDFGSQ…VRDICQCEAL (199 aa)). C86 (nucleophile) is an active-site residue. Catalysis depends on residues H181 and E183. One can recognise a GMPS ATP-PPase domain in the interval 208-400 (WTPAKIIDDA…LGLPYDMLYR (193 aa)). 235-241 (SGGVDSS) provides a ligand contact to ATP.

Homodimer.

The catalysed reaction is XMP + L-glutamine + ATP + H2O = GMP + L-glutamate + AMP + diphosphate + 2 H(+). Its pathway is purine metabolism; GMP biosynthesis; GMP from XMP (L-Gln route): step 1/1. Functionally, catalyzes the synthesis of GMP from XMP. This is GMP synthase [glutamine-hydrolyzing] from Salmonella typhimurium (strain LT2 / SGSC1412 / ATCC 700720).